Here is a 782-residue protein sequence, read N- to C-terminus: uncharacterized protein (782 aa).

3 disordered regions span residues Met-1 to Lys-127, Asn-205 to Pro-234, and Pro-308 to Arg-355. The span at Lys-24–Met-54 shows a compositional bias: basic and acidic residues. A compositionally biased stretch (low complexity) spans Lys-82–Lys-118. Over residues Ala-312–Met-324 the composition is skewed to polar residues. Positions Asn-326–Arg-336 are enriched in basic and acidic residues. Residues Ser-337 to Asn-346 are compositionally biased toward polar residues. The stretch at Met-361–Leu-628 forms a coiled coil. Residues Gly-629–Ser-668 are compositionally biased toward basic and acidic residues. A disordered region spans residues Gly-629–Gly-689. A compositionally biased stretch (basic residues) spans Arg-669–Arg-678. A compositionally biased stretch (basic and acidic residues) spans Arg-679–Gly-689.

This is an uncharacterized protein from Yarrowia lipolytica (strain CLIB 122 / E 150) (Yeast).